We begin with the raw amino-acid sequence, 305 residues long: Glyceraldehyde-3-phosphate dehydrogenase 2, cytosolic (305 aa).

2 residues coordinate NAD(+): aspartate 3 and arginine 50. D-glyceraldehyde 3-phosphate contacts are provided by residues 121-123 (SCT), threonine 152, 181-182 (TG), and arginine 204. Cysteine 122 acts as the Nucleophile in catalysis. Asparagine 286 is an NAD(+) binding site.

This sequence belongs to the glyceraldehyde-3-phosphate dehydrogenase family. Homotetramer.

It is found in the cytoplasm. The enzyme catalyses D-glyceraldehyde 3-phosphate + phosphate + NAD(+) = (2R)-3-phospho-glyceroyl phosphate + NADH + H(+). Its pathway is carbohydrate degradation; glycolysis; pyruvate from D-glyceraldehyde 3-phosphate: step 1/5. In terms of biological role, key enzyme in glycolysis that catalyzes the first step of the pathway by converting D-glyceraldehyde 3-phosphate (G3P) into 3-phospho-D-glyceroyl phosphate. Essential for the maintenance of cellular ATP levels and carbohydrate metabolism. The sequence is that of Glyceraldehyde-3-phosphate dehydrogenase 2, cytosolic (GAPC) from Hordeum vulgare (Barley).